The primary structure comprises 410 residues: Digeranylgeranylglycerophospholipid reductase (410 aa).

Alanine 15, glutamate 34, valine 118, aspartate 286, glycine 298, and isoleucine 299 together coordinate FAD. A 2,3-bis-O-(geranylgeranyl)-sn-glycerol 1-phospholipid is bound by residues lysine 343 and alanine 379.

The protein belongs to the geranylgeranyl reductase family. DGGGPL reductase subfamily. Requires FAD as cofactor.

It catalyses the reaction a 2,3-bis-O-phytanyl-sn-glycerol 1-phospholipid + 8 A = a 2,3-bis-O-(geranylgeranyl)-sn-glycerol 1-phospholipid + 8 AH2. The enzyme catalyses 2,3-bis-O-(phytanyl)-sn-glycerol 1-phosphate + 8 A = 2,3-bis-O-(geranylgeranyl)-sn-glycerol 1-phosphate + 8 AH2. The catalysed reaction is CDP-2,3-bis-O-(geranylgeranyl)-sn-glycerol + 8 AH2 = CDP-2,3-bis-O-(phytanyl)-sn-glycerol + 8 A. It carries out the reaction archaetidylserine + 8 AH2 = 2,3-bis-O-phytanyl-sn-glycero-3-phospho-L-serine + 8 A. The protein operates within membrane lipid metabolism; glycerophospholipid metabolism. Its function is as follows. Is involved in the reduction of 2,3-digeranylgeranylglycerophospholipids (unsaturated archaeols) into 2,3-diphytanylglycerophospholipids (saturated archaeols) in the biosynthesis of archaeal membrane lipids. Can fully reduce the unsaturated isoprenoid side chains of membrane phospholipids and glycolipids. Is also able to reduce the omega-position isoprene of dolichol phosphate. This chain is Digeranylgeranylglycerophospholipid reductase, found in Haloferax volcanii (strain ATCC 29605 / DSM 3757 / JCM 8879 / NBRC 14742 / NCIMB 2012 / VKM B-1768 / DS2) (Halobacterium volcanii).